The following is a 1816-amino-acid chain: Laminin subunit alpha-4 (1816 aa).

The N-terminal stretch at 1–24 (MGWSTAWCSVLALWLLWCAVCSNA) is a signal peptide. O-linked (Xyl...) (chondroitin sulfate) serine glycosylation occurs at serine 39. Intrachain disulfides connect cysteine 82/cysteine 91, cysteine 84/cysteine 98, cysteine 101/cysteine 110, cysteine 113/cysteine 129, cysteine 132/cysteine 146, cysteine 134/cysteine 155, cysteine 157/cysteine 166, cysteine 169/cysteine 184, cysteine 187/cysteine 202, cysteine 189/cysteine 209, cysteine 212/cysteine 221, and cysteine 224/cysteine 238. Laminin EGF-like domains follow at residues 82–131 (CDCN…FCQP), 132–186 (CPCP…TCKK), and 187–240 (CDCS…NCAV). The N-linked (GlcNAc...) asparagine glycan is linked to asparagine 104. N-linked (GlcNAc...) asparagine glycosylation is present at asparagine 215. The Laminin EGF-like 4; truncated domain maps to 241-255 (CNCGGGPCDSVTGEC). The tract at residues 256-825 (LEEGFEVPTG…AQTRSVASKI (570 aa)) is domain II and I. Residues asparagine 308, asparagine 333, asparagine 458, asparagine 550, asparagine 571, asparagine 574, asparagine 631, and asparagine 639 are each glycosylated (N-linked (GlcNAc...) asparagine). Residues 431–523 (THRELVDEEA…ERVKEQMEVV (93 aa)) adopt a coiled-coil conformation. Residues 556-604 (AEIDGAKNELQGKLSNLSNLSHDLVQEATDHAYNLQQEADELSRNLHSS) adopt a coiled-coil conformation. Residues 655-717 (IIYHKDESDN…AVKQLQAAER (63 aa)) adopt a coiled-coil conformation. The Cell attachment site signature appears at 717-719 (RGD). N-linked (GlcNAc...) asparagine glycans are attached at residues asparagine 735, asparagine 751, asparagine 754, asparagine 780, and asparagine 803. Residues 770–799 (AVDSARDAVRNLTEVVPQLLDQLRTVEQKR) adopt a coiled-coil conformation. Laminin G-like domains lie at 826–1030 (QVSM…SVPC), 1042–1222 (AASY…GYGC), and 1229–1397 (SRRA…LYEC). Residues cysteine 1000 and cysteine 1030 are joined by a disulfide bond. N-linked (GlcNAc...) asparagine glycosylation is present at asparagine 1088. Residues cysteine 1196 and cysteine 1222 are joined by a disulfide bond. N-linked (GlcNAc...) asparagine glycans are attached at residues asparagine 1283 and asparagine 1361. Cysteine 1365 and cysteine 1397 form a disulfide bridge. The span at 1409-1419 (KKGKNSSKPKT) shows a compositional bias: basic residues. The disordered stretch occupies residues 1409–1433 (KKGKNSSKPKTNKQGEKSKDAPSWD). Residues 1421-1430 (KQGEKSKDAP) show a composition bias toward basic and acidic residues. Laminin G-like domains lie at 1462 to 1633 (AYQY…VTPC) and 1640 to 1813 (TGTY…INSC). 2 cysteine pairs are disulfide-bonded: cysteine 1610–cysteine 1633 and cysteine 1785–cysteine 1813.

As to quaternary structure, laminin is a complex glycoprotein, consisting of three different polypeptide chains (alpha, beta, gamma), which are bound to each other by disulfide bonds into a cross-shaped molecule comprising one long and three short arms with globules at each end. Alpha-4 is a subunit of laminin-8 (laminin-411), laminin-9 (laminin-421) and laminin-14 (laminin-423). Strongly expressed in peripheral nerves, cardiac muscle, fat, dermis, lung stroma, aortic endothelium, endocardium and endothelium of blood vessels in skin and brain.

The protein localises to the secreted. The protein resides in the extracellular space. It localises to the extracellular matrix. It is found in the basement membrane. Its function is as follows. Binding to cells via a high affinity receptor, laminin is thought to mediate the attachment, migration and organization of cells into tissues during embryonic development by interacting with other extracellular matrix components. This chain is Laminin subunit alpha-4 (Lama4), found in Mus musculus (Mouse).